The primary structure comprises 486 residues: NADH-quinone oxidoreductase subunit N (486 aa).

A run of 14 helical transmembrane segments spans residues 11–31, 44–64, 74–94, 103–123, 128–148, 163–183, 206–226, 238–258, 267–287, 300–320, 328–348, 371–391, 404–424, and 452–472; these read ALPE…DLFV, MLAL…YPVL, PIAS…MIYA, FLKG…CVMV, MLTL…LIAL, FVLG…VYGG, VSLG…AVPF, PTAV…VFVI, PAAV…LVVG, MLAY…LAAT, MFYA…LLAL, YALL…LVGF, VGLT…AFYY, and LVLG…NGLY.

It belongs to the complex I subunit 2 family. NDH-1 is composed of 14 different subunits. Subunits NuoA, H, J, K, L, M, N constitute the membrane sector of the complex.

The protein resides in the cell inner membrane. It carries out the reaction a quinone + NADH + 5 H(+)(in) = a quinol + NAD(+) + 4 H(+)(out). In terms of biological role, NDH-1 shuttles electrons from NADH, via FMN and iron-sulfur (Fe-S) centers, to quinones in the respiratory chain. The immediate electron acceptor for the enzyme in this species is believed to be ubiquinone. Couples the redox reaction to proton translocation (for every two electrons transferred, four hydrogen ions are translocated across the cytoplasmic membrane), and thus conserves the redox energy in a proton gradient. This is NADH-quinone oxidoreductase subunit N from Laribacter hongkongensis (strain HLHK9).